We begin with the raw amino-acid sequence, 171 residues long: Large ribosomal subunit protein uL10 (171 aa).

It belongs to the universal ribosomal protein uL10 family. Part of the ribosomal stalk of the 50S ribosomal subunit. The N-terminus interacts with L11 and the large rRNA to form the base of the stalk. The C-terminus forms an elongated spine to which L12 dimers bind in a sequential fashion forming a multimeric L10(L12)X complex.

Forms part of the ribosomal stalk, playing a central role in the interaction of the ribosome with GTP-bound translation factors. In Paracoccus denitrificans (strain Pd 1222), this protein is Large ribosomal subunit protein uL10.